The primary structure comprises 258 residues: MLILISPAKTLDYQSPLTTTRYTLPELLDNSQQLIHEARKLTPPQISTLMRISDKLAGINAARFHDWQPDFTPENARQAILAFKGDVYTGLQAETFSEDDFDFAQQHLRMLSGLYGVLRPLDLMQPYRLEMGIRLENTRGKDLYQFWGDIITNKLNEALAAQGDNVVINLASDEYFKSVKPKKLNAEIIKPVFLDEKNGKFKIISFYAKKARGLMSRFIIENRLTKPEQLTGFNSEGYFFDEASSSNGELVFKRYEQR.

Belongs to the UPF0246 family.

This is UPF0246 protein YaaA from Escherichia coli O157:H7 (strain EC4115 / EHEC).